The sequence spans 180 residues: MNKPTLGIDLDTTLNTLDREWVKRYNEIYKDKLLPSDIKGWDIENYVKPECGKKIYDILKEPHFFRNLGVQPFAETALEELTSIFNIYIVSATHYKVCEDKGNWIKEKFPFISYQNIIFCHNKGLVHLDILIDDNPLNLENFKGNKILFDAHHNKSENRFVRARDWYEAKALCESLKDFL.

Asp-9 serves as the catalytic Nucleophile. Mg(2+)-binding residues include Asp-9, Asp-11, and Asp-134. The active-site Proton donor is Asp-11.

This sequence belongs to the 5'(3')-deoxyribonucleotidase family. Mg(2+) is required as a cofactor.

Its function is as follows. Dephosphorylates nucleoside monophosphates such as the 5' and 2'(3')-phosphates of deoxyribonucleotides in vitro. This chain is 5'(3')-deoxyribonucleotidase, found in Clostridium acetobutylicum (strain ATCC 824 / DSM 792 / JCM 1419 / IAM 19013 / LMG 5710 / NBRC 13948 / NRRL B-527 / VKM B-1787 / 2291 / W).